The following is an 88-amino-acid chain: Small ribosomal subunit protein bS20 (88 aa).

A disordered region spans residues 1–20 (MANTAQARKRARQAVVQNAH).

Belongs to the bacterial ribosomal protein bS20 family.

Functionally, binds directly to 16S ribosomal RNA. This Ralstonia nicotianae (strain ATCC BAA-1114 / GMI1000) (Ralstonia solanacearum) protein is Small ribosomal subunit protein bS20.